The sequence spans 971 residues: Exportin-2 (971 aa).

An N-acetylmethionine modification is found at Met1. The region spanning 29–102 is the Importin N-terminal domain; the sequence is AEKFLESVEG…KANIVHLMLS (74 aa). Ser112 carries the post-translational modification Phosphoserine. N6-acetyllysine occurs at positions 574 and 824. At Ser931 the chain carries Phosphoserine.

The protein belongs to the XPO2/CSE1 family. As to quaternary structure, found in a complex with CSE1L/XPO2, Ran and KPNA2. Binds with high affinity to importin-alpha only in the presence of RanGTP. The complex is dissociated by the combined action of RanBP1 and RanGAP1. Interacts with CFTR.

Its subcellular location is the cytoplasm. The protein localises to the nucleus. Functionally, export receptor for importin-alpha. Mediates importin-alpha re-export from the nucleus to the cytoplasm after import substrates (cargos) have been released into the nucleoplasm. In the nucleus binds cooperatively to importin-alpha and to the GTPase Ran in its active GTP-bound form. Docking of this trimeric complex to the nuclear pore complex (NPC) is mediated through binding to nucleoporins. Upon transit of a nuclear export complex into the cytoplasm, disassembling of the complex and hydrolysis of Ran-GTP to Ran-GDP (induced by RANBP1 and RANGAP1, respectively) cause release of the importin-alpha from the export receptor. CSE1L/XPO2 then return to the nuclear compartment and mediate another round of transport. The directionality of nuclear export is thought to be conferred by an asymmetric distribution of the GTP- and GDP-bound forms of Ran between the cytoplasm and nucleus. The sequence is that of Exportin-2 (CSE1L) from Pongo abelii (Sumatran orangutan).